A 143-amino-acid chain; its full sequence is Nucleoside diphosphate kinase (143 aa).

6 residues coordinate ATP: K11, F59, R87, T93, R104, and N114. H117 acts as the Pros-phosphohistidine intermediate in catalysis.

This sequence belongs to the NDK family. Homotetramer. The cofactor is Mg(2+).

The protein resides in the cytoplasm. The catalysed reaction is a 2'-deoxyribonucleoside 5'-diphosphate + ATP = a 2'-deoxyribonucleoside 5'-triphosphate + ADP. It catalyses the reaction a ribonucleoside 5'-diphosphate + ATP = a ribonucleoside 5'-triphosphate + ADP. Its function is as follows. Major role in the synthesis of nucleoside triphosphates other than ATP. The ATP gamma phosphate is transferred to the NDP beta phosphate via a ping-pong mechanism, using a phosphorylated active-site intermediate. The sequence is that of Nucleoside diphosphate kinase from Psychrobacter cryohalolentis (strain ATCC BAA-1226 / DSM 17306 / VKM B-2378 / K5).